Here is a 517-residue protein sequence, read N- to C-terminus: ATP synthase subunit alpha (517 aa).

174 to 181 (GDRQTGKT) provides a ligand contact to ATP.

It belongs to the ATPase alpha/beta chains family. In terms of assembly, F-type ATPases have 2 components, CF(1) - the catalytic core - and CF(0) - the membrane proton channel. CF(1) has five subunits: alpha(3), beta(3), gamma(1), delta(1), epsilon(1). CF(0) has three main subunits: a(1), b(2) and c(9-12). The alpha and beta chains form an alternating ring which encloses part of the gamma chain. CF(1) is attached to CF(0) by a central stalk formed by the gamma and epsilon chains, while a peripheral stalk is formed by the delta and b chains.

Its subcellular location is the cell inner membrane. It carries out the reaction ATP + H2O + 4 H(+)(in) = ADP + phosphate + 5 H(+)(out). In terms of biological role, produces ATP from ADP in the presence of a proton gradient across the membrane. The alpha chain is a regulatory subunit. The chain is ATP synthase subunit alpha from Polaromonas sp. (strain JS666 / ATCC BAA-500).